We begin with the raw amino-acid sequence, 226 residues long: MGDTGSERSNAPSLPPRCPCGFWGSSKTMNLCSKCFADFQKKQPDEDTAPSTSSSQSDLFPSETDSDNGNTSIPTPTVNPTQQLPTELNVDSPSKEDCGPCTDSAHVSLTTPSKRSCDSDSQSEDDTSPMKRPRLLDSGDRPDNSSRSKQKSRRRCFRCQIKLELVQQELGSCRCGYVFCMLHRLPEQHDCTFDHMGRGREEAIMKMVKLDRKVGRSCQRIGEGCS.

The segment at 12-44 adopts an A20-type zinc-finger fold; that stretch reads PSLPPRCPCGFWGSSKTMNLCSKCFADFQKKQP. Positions 18, 20, 32, and 35 each coordinate Zn(2+). Residues 42–149 are disordered; it reads KQPDEDTAPS…DRPDNSSRSK (108 aa). Composition is skewed to polar residues over residues 49–59, 67–92, and 105–114; these read APSTSSSQSDL, DNGN…NVDS, and AHVSLTTPSK. A compositionally biased stretch (basic and acidic residues) spans 134–146; sequence RLLDSGDRPDNSS. The AN1-type zinc finger occupies 150-199; the sequence is QKSRRRCFRCQIKLELVQQELGSCRCGYVFCMLHRLPEQHDCTFDHMGRG. Residues C156, C159, C173, C175, C180, H183, H189, and C191 each contribute to the Zn(2+) site.

In Xenopus laevis (African clawed frog), this protein is AN1-type zinc finger protein 3 homolog (zfand3).